A 344-amino-acid chain; its full sequence is Heptahelical transmembrane protein 3 (344 aa).

Residues 1–76 (MKRRRSAKKS…AFSWHNETLN (76 aa)) are Cytoplasmic-facing. Residues 77–97 (IWTHLIGFGIFLWMTVVSCLE) traverse the membrane as a helical segment. The Extracellular segment spans residues 98–147 (TTEISLAGVFNGMAGVRICLSSNQTLLHDSNVTHHISCLTSQGEAIPKWP). Residues 148-168 (WLVYLVGAMGCLICSSVSHLL) traverse the membrane as a helical segment. Residues 169–184 (ACHSKRFNVFFWRLDY) are Cytoplasmic-facing. The chain crosses the membrane as a helical span at residues 185-205 (AGISLMIVASFFAPIYYAFSC). The Extracellular segment spans residues 206-210 (HPNFR). The chain crosses the membrane as a helical span at residues 211-231 (LLYLSSISILGLLAIITLLSP). At 232-244 (ALSTPRFRPFRAN) the chain is on the cytoplasmic side. Residues 245–265 (LFLAMGSSAVIPATHVLCLYW) form a helical membrane-spanning segment. The Extracellular segment spans residues 266–269 (DHPN). A helical membrane pass occupies residues 270–290 (VFIALGYEIATALSYFVGATF). At 291–312 (YVSRVPERWKPGAFDMAGHSHQ) the chain is on the cytoplasmic side. A helical membrane pass occupies residues 313–333 (IFHVFVVMGALAHCVTTLLII). Over 334–344 (DFSRASPSCGF) the chain is Extracellular.

This sequence belongs to the ADIPOR family. Expressed in roots and flowers.

It is found in the membrane. May play a role in abiotic stress response. This Arabidopsis thaliana (Mouse-ear cress) protein is Heptahelical transmembrane protein 3 (HHP3).